The primary structure comprises 626 residues: Chaperone protein HtpG (626 aa).

The segment at 1 to 341 (MAKREFKAES…SEDLSLNISR (341 aa)) is a; substrate-binding. A b region spans residues 342-552 (EMLQHDRQLK…DGEVTIEMEK (211 aa)). The segment at 553 to 626 (ILNAMPDNQH…FTNDICKVMA (74 aa)) is c.

This sequence belongs to the heat shock protein 90 family. As to quaternary structure, homodimer.

It localises to the cytoplasm. In terms of biological role, molecular chaperone. Has ATPase activity. The protein is Chaperone protein HtpG of Bacillus licheniformis (strain ATCC 14580 / DSM 13 / JCM 2505 / CCUG 7422 / NBRC 12200 / NCIMB 9375 / NCTC 10341 / NRRL NRS-1264 / Gibson 46).